The chain runs to 411 residues: Metacaspase-1B (411 aa).

Residues 1–97 form a disordered region; it reads MYHRHSAPPP…PPLEAQQFGN (97 aa). The segment covering 7–65 has biased composition (pro residues); the sequence is APPPPGRSRGYPPPQQQWPPQPYQYLPYPPQGPPPAHTFPPPAHRSYPSPYPTPPPHSP. Active-site residues include H198 and C254.

Belongs to the peptidase C14B family.

Involved in cell death (apoptosis). The chain is Metacaspase-1B (casB) from Neosartorya fischeri (strain ATCC 1020 / DSM 3700 / CBS 544.65 / FGSC A1164 / JCM 1740 / NRRL 181 / WB 181) (Aspergillus fischerianus).